A 78-amino-acid polypeptide reads, in one-letter code: D-alanyl carrier protein (78 aa).

The 78-residue stretch at 1 to 78 (MEFKQEVLDV…NIVNKLTELK (78 aa)) folds into the Carrier domain. An O-(pantetheine 4'-phosphoryl)serine modification is found at Ser36.

The protein belongs to the DltC family. In terms of processing, 4'-phosphopantetheine is transferred from CoA to a specific serine of apo-DCP.

Its subcellular location is the cytoplasm. It functions in the pathway cell wall biogenesis; lipoteichoic acid biosynthesis. Its function is as follows. Carrier protein involved in the D-alanylation of lipoteichoic acid (LTA). The loading of thioester-linked D-alanine onto DltC is catalyzed by D-alanine--D-alanyl carrier protein ligase DltA. The DltC-carried D-alanyl group is further transferred to cell membrane phosphatidylglycerol (PG) by forming an ester bond, probably catalyzed by DltD. D-alanylation of LTA plays an important role in modulating the properties of the cell wall in Gram-positive bacteria, influencing the net charge of the cell wall. This is D-alanyl carrier protein from Bacillus velezensis (strain DSM 23117 / BGSC 10A6 / LMG 26770 / FZB42) (Bacillus amyloliquefaciens subsp. plantarum).